The sequence spans 344 residues: N-acetyl-gamma-glutamyl-phosphate reductase (344 aa).

The active site involves cysteine 148.

Belongs to the NAGSA dehydrogenase family. Type 1 subfamily.

It localises to the cytoplasm. The catalysed reaction is N-acetyl-L-glutamate 5-semialdehyde + phosphate + NADP(+) = N-acetyl-L-glutamyl 5-phosphate + NADPH + H(+). Its pathway is amino-acid biosynthesis; L-arginine biosynthesis; N(2)-acetyl-L-ornithine from L-glutamate: step 3/4. Catalyzes the NADPH-dependent reduction of N-acetyl-5-glutamyl phosphate to yield N-acetyl-L-glutamate 5-semialdehyde. The chain is N-acetyl-gamma-glutamyl-phosphate reductase from Geobacillus kaustophilus (strain HTA426).